The chain runs to 364 residues: Fructose-bisphosphate aldolase A (364 aa).

Threonine 9 is subject to Phosphothreonine. 2 positions are modified to phosphoserine: serine 36 and serine 39. Lysine 42 bears the N6-acetyllysine; alternate mark. Lysine 42 participates in a covalent cross-link: Glycyl lysine isopeptide (Lys-Gly) (interchain with G-Cter in SUMO1); alternate. A Glycyl lysine isopeptide (Lys-Gly) (interchain with G-Cter in SUMO2); alternate cross-link involves residue lysine 42. Arginine 43 contributes to the beta-D-fructose 1,6-bisphosphate binding site. A Phosphoserine modification is found at serine 46. N6-(2-hydroxyisobutyryl)lysine is present on lysine 99. The residue at position 108 (lysine 108) is an N6-acetyllysine. Residue lysine 111 is modified to N6-acetyllysine; alternate. Lysine 111 bears the N6-malonyllysine; alternate mark. Serine 132 bears the Phosphoserine mark. The residue at position 147 (lysine 147) is an N6-(2-hydroxyisobutyryl)lysine. Glutamate 188 (proton acceptor) is an active-site residue. Lysine 230 serves as the catalytic Schiff-base intermediate with dihydroxyacetone-P. Serine 272 carries the phosphoserine modification. Beta-D-fructose 1,6-bisphosphate-binding positions include 272–274, serine 301, and arginine 304; that span reads SGG. An N6-malonyllysine modification is found at lysine 312. N6-acetyllysine is present on lysine 330. Position 361 is a deamidated asparagine; in form beta (asparagine 361).

The protein belongs to the class I fructose-bisphosphate aldolase family. Homotetramer. Interacts with SNX9 and WAS. Interacts with FBP2; the interaction blocks FBP2 inhibition by physiological concentrations of AMP and reduces inhibition by Ca(2+). Post-translationally, asn-361 in form alpha is deaminated to Asp in form beta.

It localises to the cytoplasm. It is found in the myofibril. The protein localises to the sarcomere. Its subcellular location is the i band. The protein resides in the m line. It catalyses the reaction beta-D-fructose 1,6-bisphosphate = D-glyceraldehyde 3-phosphate + dihydroxyacetone phosphate. It functions in the pathway carbohydrate degradation; glycolysis; D-glyceraldehyde 3-phosphate and glycerone phosphate from D-glucose: step 4/4. Functionally, plays a key role in glycolysis and gluconeogenesis. In addition, may also function as scaffolding protein. The protein is Fructose-bisphosphate aldolase A (ALDOA) of Oryctolagus cuniculus (Rabbit).